Consider the following 251-residue polypeptide: MTVKKIAILYTDEDNEWSKPWGNFVDMAIKLLEQTRKLECIAEDVEYEVFHVQKNVFPQLSDLQKDEYLGIYITGSKYDSFDNEIEWIMKLRSFLNEMLTSKTEYPPVAGICFGHQVIAAALGSSVGRNPKGFEGGVVSLKLNSVGQKLFGAQELNLSEVHSDCVFDVPEGYQNWASSEKCQNQGFYRQNRVLTFQGHPEFNSDVAQKGLLKSQDKLTLEEFNRYERQCQELDNNGIQAARNIWRLFLQKI.

A Glutamine amidotransferase type-1 domain is found at 48 to 232 (EVFHVQKNVF…NRYERQCQEL (185 aa)). Catalysis depends on for GATase activity residues Cys112, His198, and Glu200.

The protein resides in the cytoplasm. May have a role in copper and iron homeostasis. The protein is Putative glutamine amidotransferase YLR126C of Saccharomyces cerevisiae (strain ATCC 204508 / S288c) (Baker's yeast).